The sequence spans 1035 residues: Enteropeptidase (1035 aa).

Residue glycine 2 is the site of N-myristoyl glycine attachment. Residues 2-18 (GSKRSVPSRHRSLTTYE) lie on the Cytoplasmic side of the membrane. A helical; Signal-anchor for type II membrane protein membrane pass occupies residues 19–47 (VMFAVLFVILVALCAGLIAVSWLSIQGSV). Residues 48 to 1035 (KDAAFGKSHE…FTEWIQSFLH (988 aa)) are Extracellular-facing. Residues 54–169 (KSHEARGTLK…NSIDITASLE (116 aa)) enclose the SEA domain. Residues asparagine 116, asparagine 147, asparagine 170, and asparagine 194 are each glycosylated (N-linked (GlcNAc...) asparagine). The 42-residue stretch at 197–238 (IECPPDSRLCADALKCIAIDLFCDGELNCPDGSDEDNKTCAT) folds into the LDL-receptor class A 1 domain. Intrachain disulfides connect cysteine 199–cysteine 212, cysteine 206–cysteine 225, cysteine 219–cysteine 236, and cysteine 240–cysteine 269. N-linked (GlcNAc...) asparagine glycosylation is found at asparagine 233, asparagine 263, asparagine 264, asparagine 404, asparagine 456, asparagine 486, asparagine 519, asparagine 550, and asparagine 646. The 111-residue stretch at 240–350 (CDGRFLLTGS…IGFKVTYTAF (111 aa)) folds into the CUB 1 domain. Positions 358–520 (YEKINCNFED…ISLTYGICNV (163 aa)) constitute an MAM domain. Cysteine 540 and cysteine 568 are oxidised to a cystine. Positions 540–650 (CGGPHDLWEP…QGFKANFTTG (111 aa)) constitute a CUB 2 domain. Residues 657–695 (EPCKEDNFQCKDGECIPLVNLCDGFPHCKDGSDEAHCVR) enclose the LDL-receptor class A 2 domain. 3 cysteine pairs are disulfide-bonded: cysteine 659-cysteine 671, cysteine 666-cysteine 684, and cysteine 678-cysteine 693. Residues 694–787 (VRLFNGTTDS…LILLQCNYKS (94 aa)) enclose the SRCR domain. N-linked (GlcNAc...) asparagine glycans are attached at residues asparagine 698, asparagine 722, asparagine 741, and asparagine 762. Intrachain disulfides connect cysteine 773-cysteine 783, cysteine 788-cysteine 912, cysteine 826-cysteine 842, cysteine 926-cysteine 993, cysteine 957-cysteine 972, and cysteine 983-cysteine 1011. Residues 801-1035 (IVGGSDSREG…FTEWIQSFLH (235 aa)) form the Peptidase S1 domain. The active-site Charge relay system is histidine 841. An N-linked (GlcNAc...) asparagine glycan is attached at asparagine 864. Residue aspartate 892 is the Charge relay system of the active site. N-linked (GlcNAc...) asparagine glycosylation is found at asparagine 903 and asparagine 965. Residue serine 987 is the Charge relay system of the active site.

The protein belongs to the peptidase S1 family. As to quaternary structure, heterodimer of a catalytic (light) chain and a multidomain (heavy) chain linked by a disulfide bond. In terms of processing, the chains are derived from a single precursor that is cleaved by a trypsin-like protease. Intestinal brush border.

The protein localises to the membrane. It carries out the reaction Activation of trypsinogen by selective cleavage of 6-Lys-|-Ile-7 bond.. In terms of biological role, responsible for initiating activation of pancreatic proteolytic proenzymes (trypsin, chymotrypsin and carboxypeptidase A). It catalyzes the conversion of trypsinogen to trypsin which in turn activates other proenzymes including chymotrypsinogen, procarboxypeptidases, and proelastases. The protein is Enteropeptidase (TMPRSS15) of Bos taurus (Bovine).